Reading from the N-terminus, the 159-residue chain is Protein US8.5 (159 aa).

The interval 27 to 107 (SSQPLDPEGP…APSPHPRPPG (81 aa)) is disordered. The segment covering 80-91 (SDERGPPRHDRP) has biased composition (basic and acidic residues).

It belongs to the HHV-1 US8.5 protein family. In terms of processing, phosphorylated.

It localises to the host nucleus. It is found in the host nucleolus. This Human herpesvirus 1 (strain 17) (HHV-1) protein is Protein US8.5.